The primary structure comprises 3926 residues: Protein bassoon (3926 aa).

Residues M1 to I161 form a disordered region. G2 carries N-myristoyl glycine lipidation. 2 stretches are compositionally biased toward pro residues: residues P15–G30 and P58–G72. A 5 X 2 AA tandem repeats of P-G region spans residues P23–G32. The interval P61–G74 is 7 X 2 AA tandem repeats of P-G. Composition is skewed to polar residues over residues R90 to G105 and Q130 to S157. S145 bears the Phosphoserine mark. At R148 the chain carries Omega-N-methylarginine. C4-type zinc fingers lie at residues C170 to C193 and C198 to C220. Disordered regions lie at residues T231–Q343 and S366–P459. Residues A233–H243 are compositionally biased toward polar residues. Residues S244 and S248 each carry the phosphoserine modification. Over residues S366–P377 the composition is skewed to polar residues. C4-type zinc fingers lie at residues C465–C488 and C493–C515. Disordered stretches follow at residues S524 to G927 and G940 to T1248. A compositionally biased stretch (low complexity) spans P552 to P569. 3 consecutive repeat copies span residues K571–T577, K578–S584, and K585–K591. Residues K571–K591 form a 3 X 7 AA tandem repeats of K-A-S-P-[LQ]-[APS]-[KST] region. Pro residues predominate over residues M619 to A631. The segment covering Q671 to L680 has biased composition (polar residues). Residues S681–T698 show a composition bias toward low complexity. A compositionally biased stretch (acidic residues) spans F771–S787. Basic and acidic residues predominate over residues A788 to Q797. A compositionally biased stretch (acidic residues) spans S851 to T862. R867 is subject to Omega-N-methylarginine. Position 970 is a phosphoserine (S970). The span at P984 to S1001 shows a compositional bias: low complexity. The stretch at I1037–T1092 forms a coiled coil. Residues D1039–L1052 show a composition bias toward acidic residues. Phosphoserine is present on residues S1040 and S1041. Positions L1053–R1066 are enriched in basic and acidic residues. S1090 bears the Phosphoserine mark. T1092 carries the post-translational modification Phosphothreonine. A phosphoserine mark is found at S1098 and S1104. Basic and acidic residues predominate over residues E1107–S1122. Low complexity-rich tracts occupy residues C1123–D1133 and S1163–P1180. A coiled-coil region spans residues L1181–A1208. The segment covering K1182–L1197 has biased composition (basic and acidic residues). The span at Q1199–R1209 shows a compositional bias: low complexity. Residue S1226 is modified to Phosphoserine. The stretch at R1276–E1294 forms a coiled coil. 2 disordered regions span residues M1298–W1547 and R1570–S1620. Residues S1322–S1332 show a composition bias toward low complexity. An O-linked (GlcNAc) threonine glycan is attached at T1343. Over residues F1346–K1355 the composition is skewed to basic and acidic residues. Low complexity-rich tracts occupy residues S1358 to S1367 and G1377 to G1392. O-linked (GlcNAc) threonine glycosylation is present at T1384. Positions R1408–D1434 are enriched in polar residues. Positions P1466–P1493 are enriched in low complexity. Residues S1477, S1486, and S1488 each carry the phosphoserine modification. Over residues R1570 to T1598 the composition is skewed to polar residues. Over residues P1606–P1616 the composition is skewed to pro residues. 2 positions are modified to omega-N-methylarginine: R1787 and R1791. An Asymmetric dimethylarginine; alternate modification is found at R1801. An Omega-N-methylarginine; alternate modification is found at R1801. R1813 bears the Omega-N-methylarginine mark. Residues P1924–G1978 are disordered. 2 positions are modified to phosphoserine: S1985 and S2041. Omega-N-methylarginine is present on residues R2046 and R2076. Residues R2250, R2260, and R2266 each carry the asymmetric dimethylarginine modification. The segment at A2287–E2309 is disordered. A glycan (O-linked (GlcNAc) threonine) is linked at T2314. The span at G2324–A2341 shows a compositional bias: low complexity. 2 disordered regions span residues G2324–E2370 and P2532–L2568. A coiled-coil region spans residues R2351–P2476. The segment covering G2353–E2370 has biased composition (basic and acidic residues). The span at S2533–E2543 shows a compositional bias: polar residues. S2570 carries the phosphoserine modification. Residues T2587 and T2614 each carry the phosphothreonine modification. A disordered region spans residues R2601–A2655. Basic and acidic residues predominate over residues R2635–A2647. T2691 carries an O-linked (GlcNAc) threonine glycan. Residues E2721–E3268 are interaction with DAO. Phosphoserine occurs at positions 2802, 2851, and 2857. The disordered stretch occupies residues T2845 to K2865. O-linked (GlcNAc) threonine glycosylation is present at T2936. Residues S2939–L2981 are a coiled coil. The residue at position 3013 (S3013) is a Phosphoserine. Residues A3039–R3055 are compositionally biased toward low complexity. 3 disordered regions span residues A3039–I3375, G3424–H3551, and E3572–S3897. A compositionally biased stretch (pro residues) spans Y3083 to P3095. Positions A3165–S3176 are enriched in low complexity. Polar residues predominate over residues S3205 to P3228. At S3291 the chain carries Phosphoserine. 3 stretches are compositionally biased toward basic and acidic residues: residues G3321–K3333, Q3363–I3375, and G3465–Q3477. The residue at position 3373 (S3373) is a Phosphoserine. R3492 is subject to Omega-N-methylarginine. Composition is skewed to basic and acidic residues over residues V3540–H3551, W3583–D3593, L3628–H3647, and H3657–P3681. Positions A3703 to S3712 are enriched in polar residues. A compositionally biased stretch (low complexity) spans P3741–T3807. R3808 is modified (omega-N-methylarginine). 2 stretches are compositionally biased toward low complexity: residues A3849 to A3860 and G3882 to G3892.

In terms of assembly, interacts with PCLO, ERC2/CAST1, RIMS1 and UNC13A. Interacts with TPRG1L. Interacts with DYNLL1 and DYNLL2; these interactions potentially link PTVs to dynein and myosin V motor complexes. Interacts with ATG5; this interaction is important for the regulation of presynaptic autophagy. Interacts (via C-terminus) with TRIO (via N-terminus). Interacts with CTBP1. Interacts with SIAH1; this interaction negatively regulates SIAH1 E3 ligase activity. Interacts (via coiled region) with DAO; the interaction is direct. Myristoylated. The N-terminal myristoylation is not sufficient for presynaptic localization. In terms of tissue distribution, exclusively expressed in brain.

It is found in the cytoplasm. It localises to the presynaptic active zone. The protein localises to the cytoskeleton. The protein resides in the cytoplasmic vesicle. Its subcellular location is the secretory vesicle. It is found in the synaptic vesicle membrane. Functionally, scaffold protein of the presynaptic cytomatrix at the active zone (CAZ) which is the place in the synapse where neurotransmitter is released. After synthesis, participates in the formation of Golgi-derived membranous organelles termed Piccolo-Bassoon transport vesicles (PTVs) that are transported along axons to sites of nascent synaptic contacts. At the presynaptic active zone, regulates the spatial organization of synaptic vesicle cluster, the protein complexes that execute membrane fusion and compensatory endocytosis. Also functions in processes other than assembly such as the regulation of specific presynaptic protein ubiquitination by interacting with SIAH1 or the regulation of presynaptic autophagy by associating with ATG5. Also mediates synapse to nucleus communication leading to reconfiguration of gene expression by associating with the transcriptional corepressor CTBP1 and by subsequently reducing the size of its pool available for nuclear import. Inhibits the activity of the proportion of DAO enzyme that localizes to the presynaptic active zone, which may modulate synaptic transmission. This is Protein bassoon from Homo sapiens (Human).